The following is a 518-amino-acid chain: Cytochrome P450 704C1 (518 aa).

2 helical membrane passes run 5-25 (ILTMFVTVSALALACSLWIAS) and 299-319 (VILNFMVAARDTTAIALSWFI). A heme-binding site is contributed by C461.

It belongs to the cytochrome P450 family. Heme serves as cofactor.

It localises to the membrane. This Pinus taeda (Loblolly pine) protein is Cytochrome P450 704C1 (CYP704C1).